The sequence spans 903 residues: Translation initiation factor IF-2 (903 aa).

Residues 49 to 314 (LNREHGSGPD…GSSLQQGFNK (266 aa)) form a disordered region. Positions 68-82 (STLNIQGTGGKSKSV) are enriched in polar residues. Composition is skewed to basic and acidic residues over residues 93–163 (VKRD…EAAE) and 174–225 (EVSK…ENAT). The segment covering 265 to 279 (GRARPAKVARQKKSN) has biased composition (basic residues). Over residues 280-293 (KHSESKADREEARA) the composition is skewed to basic and acidic residues. Positions 402 to 571 (PRAPVVTIMG…LLQSEVLELK (170 aa)) constitute a tr-type G domain. Residues 411–418 (GHVDHGKT) are G1. 411 to 418 (GHVDHGKT) is a GTP binding site. The G2 stretch occupies residues 436–440 (GITQH). A G3 region spans residues 457–460 (DTPG). GTP contacts are provided by residues 457–461 (DTPGH) and 511–514 (NKID). A G4 region spans residues 511 to 514 (NKID). The interval 547–549 (SAK) is G5.

The protein belongs to the TRAFAC class translation factor GTPase superfamily. Classic translation factor GTPase family. IF-2 subfamily.

The protein resides in the cytoplasm. Functionally, one of the essential components for the initiation of protein synthesis. Protects formylmethionyl-tRNA from spontaneous hydrolysis and promotes its binding to the 30S ribosomal subunits. Also involved in the hydrolysis of GTP during the formation of the 70S ribosomal complex. The sequence is that of Translation initiation factor IF-2 from Cronobacter sakazakii (strain ATCC BAA-894) (Enterobacter sakazakii).